Here is a 446-residue protein sequence, read N- to C-terminus: Actin-related protein 6 (446 aa).

The span at 1-11 shows a compositional bias: basic residues; it reads MTGRGGAKKSR. The segment at 1 to 24 is disordered; that stretch reads MTGRGGAKKSRAAGPAPPTTTLVL.

The protein belongs to the actin family. ARP6 subfamily. As to quaternary structure, component of the SWR1 chromatin remodeling complex.

It is found in the cytoplasm. It localises to the cytoskeleton. The protein resides in the nucleus. Functionally, component of the SWR1 complex which mediates the ATP-dependent exchange of histone H2A for the H2A variant H2A.Z leading to transcriptional regulation of selected genes by chromatin remodeling. Involved in chromosome stability. The polypeptide is Actin-related protein 6 (arp-6) (Neurospora crassa (strain ATCC 24698 / 74-OR23-1A / CBS 708.71 / DSM 1257 / FGSC 987)).